The primary structure comprises 245 residues: Probable membrane transporter protein YdhB (245 aa).

The next 8 membrane-spanning stretches (helical) occupy residues 1 to 21, 34 to 56, 71 to 91, 98 to 118, 137 to 157, 177 to 197, 199 to 219, and 225 to 245; these read MLII…GAGG, HIPI…LSGA, LIVG…TSFI, YLTA…LFIL, ILGI…APFI, MLVI…EGFV, YVLL…GAKF, and KVVL…LLLF.

This sequence belongs to the 4-toluene sulfonate uptake permease (TSUP) (TC 2.A.102) family.

The protein resides in the cell membrane. The chain is Probable membrane transporter protein YdhB (ydhB) from Bacillus subtilis (strain 168).